We begin with the raw amino-acid sequence, 21 residues long: 40 kDa major outer membrane protein (21 aa).

In terms of assembly, disulfide bond interactions within and between MOMP molecules and other components form high molecular-weight oligomers.

The protein localises to the cell outer membrane. In terms of biological role, structural rigidity of the outer membrane of elementary bodies and porin forming, permitting diffusion of solutes through the intracellular reticulate body membrane. This chain is 40 kDa major outer membrane protein, found in Actinobacillus pleuropneumoniae (Haemophilus pleuropneumoniae).